Here is a 333-residue protein sequence, read N- to C-terminus: MARHSFFCVDGHTCGNPVRLVAGGGPNLNGSTMMEKRAHFLAEYDWIRTGLMFEPRGHDMMSGSILYPPTRPDCDVAVLFIETSGCLPMCGHGTIGTVTMAIEQGLVTPKTPGKLNLDTPAGLVAIEYEQDGQYVERVRLTNVPAFLYAEGLEVECPDLGPIKVDVAYGGNFYAIVEPQENYTDMDDYSALQLIAWSPVLRQRLNEKYKFQHPELPDINRLSHILWTGKPKHPQAHARNAVFYGDKAIDRSPCGTGTSARMAQLAAKGKLKPGDEFIHESIIGSLFHGRVERAAEVAGRPAIVPSIAGWARMTGYNTIFIDDRDPFAHGFSVA.

The Proton acceptor role is filled by cysteine 90. Substrate-binding positions include 91–92 (GH) and aspartate 249. The Proton donor role is filled by cysteine 253. Position 254–255 (254–255 (GT)) interacts with substrate.

Belongs to the proline racemase family. As to quaternary structure, homodimer.

The catalysed reaction is trans-4-hydroxy-L-proline = cis-4-hydroxy-D-proline. Allows intracellular utilization of 4-hydroxyproline, one of the major constituents of host collagen, by converting 4-hydroxy-L-proline to 4-hydroxy-D-proline, which can be further metabolized by intracellular 4-hydroxy-D-proline oxidases. Strong B-cell mitogen. Plays an important role in the regulation of intra- and extracellular amino acid pools, allowing the bacterium to profit from host precursors and enzymatic pathways. This Brucella canis (strain ATCC 23365 / NCTC 10854 / RM-666) protein is 4-hydroxyproline epimerase.